Reading from the N-terminus, the 220-residue chain is Pyridoxine/pyridoxamine 5'-phosphate oxidase (220 aa).

Residues 69–74 (RVVLLK), 84–85 (YT), Arg-90, Lys-91, and Gln-113 contribute to the FMN site. Lys-74 is a substrate binding site. Substrate contacts are provided by Tyr-131, Arg-135, and Ser-139. FMN-binding positions include 148–149 (QS) and Trp-193. Substrate is bound at residue 199–201 (RLH). FMN is bound at residue Arg-203.

It belongs to the pyridoxamine 5'-phosphate oxidase family. In terms of assembly, homodimer. FMN is required as a cofactor.

It carries out the reaction pyridoxamine 5'-phosphate + O2 + H2O = pyridoxal 5'-phosphate + H2O2 + NH4(+). The enzyme catalyses pyridoxine 5'-phosphate + O2 = pyridoxal 5'-phosphate + H2O2. Its pathway is cofactor metabolism; pyridoxal 5'-phosphate salvage; pyridoxal 5'-phosphate from pyridoxamine 5'-phosphate: step 1/1. The protein operates within cofactor metabolism; pyridoxal 5'-phosphate salvage; pyridoxal 5'-phosphate from pyridoxine 5'-phosphate: step 1/1. Functionally, catalyzes the oxidation of either pyridoxine 5'-phosphate (PNP) or pyridoxamine 5'-phosphate (PMP) into pyridoxal 5'-phosphate (PLP). This is Pyridoxine/pyridoxamine 5'-phosphate oxidase from Myxococcus xanthus.